Consider the following 167-residue polypeptide: Ureidoglycolate lyase (167 aa).

Belongs to the ureidoglycolate lyase family. Homodimer. Ni(2+) is required as a cofactor.

The enzyme catalyses (S)-ureidoglycolate = urea + glyoxylate. It functions in the pathway nitrogen metabolism; (S)-allantoin degradation. In terms of biological role, catalyzes the catabolism of the allantoin degradation intermediate (S)-ureidoglycolate, generating urea and glyoxylate. Involved in the utilization of allantoin as nitrogen source. The sequence is that of Ureidoglycolate lyase from Pseudomonas fluorescens (strain Pf0-1).